The following is a 359-amino-acid chain: MSSSIIGRCHFVADSIEAAGTKRRTTRWRSPRAAVIPSFHLPMRSNEVKNRTFADDIKALRLITAIKTPYLPDGRFDLEAYDTLVNLQIENGAEGVIVGGTTGEGQLMSWDEHIMLIGHTVNCFGGSIKVIGNTGSNSTREAIHATEQGFAVGMHAALHINPYYGKTSLEGLISHFESVLPMGPTIIYNVPSRTGQDIPPRVIQTMAKSPNLAGVKECVGNDRVEQYTSDGVVVWSGNDDECHVSRWDYGATGVISVTSNLVPGLMRELMFGGKNPALNSKLMPLMEWLFHEPNPIALNTALAQLGVVRPVFRLPYVPLTKAKREEFVKIVKEIGRENFIGERDVQILDDNDFILVGRY.

The N-terminal 33 residues, 1–33 (MSSSIIGRCHFVADSIEAAGTKRRTTRWRSPRA), are a transit peptide targeting the chloroplast. Threonine 102 lines the pyruvate pocket. Catalysis depends on tyrosine 188, which acts as the Proton donor/acceptor. The active-site Schiff-base intermediate with substrate is lysine 216. Pyruvate is bound at residue isoleucine 255.

This sequence belongs to the DapA family.

It is found in the plastid. It localises to the chloroplast. The catalysed reaction is L-aspartate 4-semialdehyde + pyruvate = (2S,4S)-4-hydroxy-2,3,4,5-tetrahydrodipicolinate + H2O + H(+). Its pathway is amino-acid biosynthesis; L-lysine biosynthesis via DAP pathway; (S)-tetrahydrodipicolinate from L-aspartate: step 3/4. Catalyzes the condensation of (S)-aspartate-beta-semialdehyde [(S)-ASA] and pyruvate to 4-hydroxy-tetrahydrodipicolinate (HTPA). This chain is 4-hydroxy-tetrahydrodipicolinate synthase, chloroplastic (DHPS1), found in Nicotiana tabacum (Common tobacco).